A 218-amino-acid polypeptide reads, in one-letter code: Protein-L-isoaspartate O-methyltransferase (218 aa).

S63 is an active-site residue.

The protein belongs to the methyltransferase superfamily. L-isoaspartyl/D-aspartyl protein methyltransferase family.

The protein localises to the cytoplasm. The catalysed reaction is [protein]-L-isoaspartate + S-adenosyl-L-methionine = [protein]-L-isoaspartate alpha-methyl ester + S-adenosyl-L-homocysteine. Functionally, catalyzes the methyl esterification of L-isoaspartyl residues in peptides and proteins that result from spontaneous decomposition of normal L-aspartyl and L-asparaginyl residues. It plays a role in the repair and/or degradation of damaged proteins. The protein is Protein-L-isoaspartate O-methyltransferase of Syntrophus aciditrophicus (strain SB).